The following is a 194-amino-acid chain: Peptidyl-tRNA hydrolase (194 aa).

A tRNA-binding site is contributed by Tyr17. Catalysis depends on His22, which acts as the Proton acceptor. TRNA is bound by residues Tyr69, Asn71, and Asn117.

It belongs to the PTH family. Monomer.

It is found in the cytoplasm. It catalyses the reaction an N-acyl-L-alpha-aminoacyl-tRNA + H2O = an N-acyl-L-amino acid + a tRNA + H(+). Its function is as follows. Hydrolyzes ribosome-free peptidyl-tRNAs (with 1 or more amino acids incorporated), which drop off the ribosome during protein synthesis, or as a result of ribosome stalling. Catalyzes the release of premature peptidyl moieties from peptidyl-tRNA molecules trapped in stalled 50S ribosomal subunits, and thus maintains levels of free tRNAs and 50S ribosomes. The chain is Peptidyl-tRNA hydrolase from Arthrobacter sp. (strain FB24).